Reading from the N-terminus, the 1630-residue chain is Merozoite surface protein 1 (1630 aa).

Positions 1-19 are cleaved as a signal peptide; the sequence is MKIIFFLCSFLFFIINTQC. The disordered stretch occupies residues 60–113; it reads TKGASAQSGTSGTSGTSGPSGPSGTSPSSRSNTLPRSNTSSGASPPADASDSDA. Residues 67 to 84 are tripeptide SG(TP) repeat; the sequence is SGTSGTSGTSGPSGPSGT. The segment covering 67–88 has biased composition (low complexity); that stretch reads SGTSGTSGTSGPSGPSGTSPSS. The span at 89–98 shows a compositional bias: polar residues; that stretch reads RSNTLPRSNT. Residue Asn97 is glycosylated (N-linked (GlcNAc...) asparagine). Over residues 99-108 the composition is skewed to low complexity; that stretch reads SSGASPPADA. Asn259 is a glycosylation site (N-linked (GlcNAc...) asparagine). Positions 680 to 755 are disordered; that stretch reads KKNIKTEGQS…VPTPPAPVNN (76 aa). 2 stretches are compositionally biased toward polar residues: residues 685-695 and 702-713; these read TEGQSDNSEPS and GQATTKPGQQAG. Over residues 721–732 the composition is skewed to low complexity; it reads VQAQAQEQKQAQ. N-linked (GlcNAc...) asparagine glycans are attached at residues Asn755, Asn759, Asn774, and Asn835. The tract at residues 884-906 is disordered; sequence SMQPLSLTPQDKPEVSANDDTSH. Asn911, Asn955, Asn1049, Asn1156, and Asn1165 each carry an N-linked (GlcNAc...) asparagine glycan. The required for binding to host erythrocyte cell membrane stretch occupies residues 993-1107; it reads QLSFDLYNKY…EESIQTEDNY (115 aa). A compositionally biased stretch (polar residues) spans 1190–1203; the sequence is VSESGSDTLEQSQP. The segment at 1190–1220 is disordered; the sequence is VSESGSDTLEQSQPKKPASTHVGAESNTITT. N-linked (GlcNAc...) asparagine glycosylation is found at Asn1436 and Asn1517. 2 EGF-like domains span residues 1521-1561 and 1562-1610; these read HQCV…VENP and NPTC…FCSS. Cystine bridges form between Cys1523-Cys1534, Cys1528-Cys1544, Cys1546-Cys1557, Cys1565-Cys1578, Cys1572-Cys1592, and Cys1594-Cys1608. The GPI-anchor amidated serine moiety is linked to residue Ser1609. Positions 1610–1630 are cleaved as a propeptide — removed in mature form; the sequence is SSNFLGISFLLILMLILYSFI.

Forms a complex composed of subunits p83, p30, p38, and p42 which remain non-covalently associated; the complex is formed at the merozoite surface prior to egress from host erythrocytes. Forms a complex composed of processed MSP1 subunits, MSP6 subunit p36 and MSP7; the complex is formed at the merozoite surface prior to egress from host erythrocytes. Within the complex, interacts (via subunit p38) with MSP6 subunit p36 and (via subunits p83, p30 and p38) with MSP7 (via subunit p22). Forms a complex composed of MSP1, MSP6, DBLMSP1 and DBLMSP2. Within the complex, interacts (via subunit p38) with DBLMSP1 and DBLMSP2. Forms a complex composed of MSP1, and rhoptry proteins RhopH3, RAP1 and CLAG9/RhopH3. Within the complex, interacts (via subunits p42 and p19) with RhopH3 (via C-terminus). Forms a complex composed of MSP1, MSP6, MSP7, MSP9 and MSP3; within the complex, MSP6 and MSP9 mediate the binding to the host erythrocyte. Interacts (via subunits p19 and p42) with MSP9; the interaction is direct; MSP1 subunits p19 or p42, and MSP9 form a co-ligand complex that interacts with host SLC4A1/Band 3 protein. May interact with PFD6. Interacts with host spectrin. In terms of assembly, interacts with host glycophorin GYPA in a sialic acid-independent manner. As to quaternary structure, interacts with host proinflammatory cytokine S100P; the interaction blocks S100P inflammatory and chemotactic activities. Interacts with host SLC4A1/Band 3 (via 5ABC region) on the host erythrocyte surface in a sialic acid-independent manner. In terms of processing, the p190 precursor is cleaved by SUB1 prior to merozoite egress into 4 subunits p83, p30, p38, and p42 which remain non-covalently associated. SUB1-mediated proteolytic cleavage occurs in an orderly manner; the first cleavage occurs at the p83/p30 site, followed by cleavage at the p30/p38 site, the last cleavage occurs at the p38/p42 site. The order of cleavage is essential for parasite viability. SUB1-mediated processing is essential for merozoite egress. In a second processing step during erythrocyte invasion, p42 is cleaved by SUB2 into p33 and p19; the latter remains attached to the merozoite surface via its GPI-anchor and stays on the surface during the subsequent ring stage.

The protein resides in the cell membrane. The protein localises to the secreted. It is found in the vacuole membrane. During the asexual blood stage, involved in merozoite egress from host erythrocytes possibly via its interaction with the host cytoskeleton protein spectrin resulting in the destabilization of the host cytoskeleton and thus leading to erythrocyte cell membrane rupture. Involved in the binding to host erythrocytes and is required for host erythrocyte invasion. Its function is as follows. By binding to host proinflammatory cytokine S100P may interfere with host immune responses. In terms of biological role, involved in merozoite invasion of host erythrocytes. May play a role in the biogenesis and/or function of the food vacuole during the intraerythrocytic development. The protein is Merozoite surface protein 1 of Plasmodium falciparum (isolate K1 / Thailand).